The primary structure comprises 630 residues: Vacuolar protein 8 (630 aa).

A lipid anchor (N-myristoyl glycine) is attached at Gly2. ARM repeat units follow at residues 74–115, 117–156, 158–197, 199–238, 242–281, 283–322, 324–364, 408–447, and 456–495; these read EITE…NLAV, AENK…NLAT, DENK…NMTH, DENR…NIAV, NRKK…NLAS, SKYQ…NVSI, PANE…NLAA, DDLK…NLSS, and FNAV…QLLE. 2 disordered regions span residues 519 to 558 and 572 to 630; these read AKSP…EGEG and EVGE…GRDR. The segment covering 543–558 has biased composition (acidic residues); sequence SEDEFEDGLTDQEGEG. Polar residues predominate over residues 598-607; that stretch reads GQGQTSQVGS.

Belongs to the beta-catenin family.

The protein localises to the vacuole membrane. In terms of biological role, functions in both vacuole inheritance and protein targeting from the cytoplasm to vacuole. The sequence is that of Vacuolar protein 8 (VAC8) from Cryptococcus neoformans var. neoformans serotype D (strain B-3501A) (Filobasidiella neoformans).